Reading from the N-terminus, the 87-residue chain is Small ribosomal subunit protein bS20 (87 aa).

Residues 1–28 form a disordered region; sequence MANIKSQQKRNRTNERARLRNKSVKSSL.

This sequence belongs to the bacterial ribosomal protein bS20 family.

Functionally, binds directly to 16S ribosomal RNA. This Mycobacterium marinum (strain ATCC BAA-535 / M) protein is Small ribosomal subunit protein bS20.